Reading from the N-terminus, the 798-residue chain is Tripartite terminase subunit 1 (798 aa).

Residues 191-219 form a C3H1-type zinc finger; the sequence is CFQCYEELMAVPNQGRSINRRMQGLLCDH. Over residues 416 to 429 the composition is skewed to low complexity; that stretch reads AAGAARSRAEAASG. Residues 416–458 are disordered; it reads AAGAARSRAEAASGAGAGGEEGAGAAAGRGNTGGDEGAGTTTA. Residues 430–452 show a composition bias toward gly residues; sequence AGAGGEEGAGAAAGRGNTGGDEG. 674-681 serves as a coordination point for ATP; sequence YNETFGKQ.

The protein belongs to the herpesviridae TRM1 protein family. As to quaternary structure, associates with TRM2 and TRM3 to form the tripartite terminase complex. Interacts with portal protein.

It is found in the host nucleus. In terms of biological role, component of the molecular motor that translocates viral genomic DNA in empty capsid during DNA packaging. Forms a tripartite terminase complex together with TRM2 and TRM3 in the host cytoplasm. Once the complex reaches the host nucleus, it interacts with the capsid portal vertex. This portal forms a ring in which genomic DNA is translocated into the capsid. TRM1 carries an endonuclease activity that plays an important role for the cleavage of concatemeric viral DNA into unit length genomes. The polypeptide is Tripartite terminase subunit 1 (Murid herpesvirus 1 (strain Smith) (MuHV-1)).